We begin with the raw amino-acid sequence, 231 residues long: Large ribosomal subunit protein uL1 (231 aa).

It belongs to the universal ribosomal protein uL1 family. Part of the 50S ribosomal subunit.

Binds directly to 23S rRNA. The L1 stalk is quite mobile in the ribosome, and is involved in E site tRNA release. In terms of biological role, protein L1 is also a translational repressor protein, it controls the translation of the L11 operon by binding to its mRNA. This Pseudomonas fluorescens (strain ATCC BAA-477 / NRRL B-23932 / Pf-5) protein is Large ribosomal subunit protein uL1.